The chain runs to 328 residues: UPF0194 membrane protein YPTS_1292 (328 aa).

The signal sequence occupies residues methionine 1–glycine 22. 2 coiled-coil regions span residues tyrosine 80 to glutamate 109 and alanine 142 to alanine 209.

It belongs to the UPF0194 family.

It localises to the periplasm. This is UPF0194 membrane protein YPTS_1292 from Yersinia pseudotuberculosis serotype IB (strain PB1/+).